The following is a 556-amino-acid chain: Arginine--tRNA ligase (556 aa).

Positions 132-142 (ANPTGDLHLGH) match the 'HIGH' region motif.

The protein belongs to the class-I aminoacyl-tRNA synthetase family. As to quaternary structure, monomer.

The protein localises to the cytoplasm. It catalyses the reaction tRNA(Arg) + L-arginine + ATP = L-arginyl-tRNA(Arg) + AMP + diphosphate. In Bacillus cereus (strain ATCC 14579 / DSM 31 / CCUG 7414 / JCM 2152 / NBRC 15305 / NCIMB 9373 / NCTC 2599 / NRRL B-3711), this protein is Arginine--tRNA ligase.